Here is a 220-residue protein sequence, read N- to C-terminus: Phosphatidylserine decarboxylase proenzyme (220 aa).

Serine 188 functions as the Schiff-base intermediate with substrate; via pyruvic acid in the catalytic mechanism. Serine 188 is modified (pyruvic acid (Ser); by autocatalysis).

This sequence belongs to the phosphatidylserine decarboxylase family. PSD-A subfamily. As to quaternary structure, heterodimer of a large membrane-associated beta subunit and a small pyruvoyl-containing alpha subunit. It depends on pyruvate as a cofactor. Post-translationally, is synthesized initially as an inactive proenzyme. Formation of the active enzyme involves a self-maturation process in which the active site pyruvoyl group is generated from an internal serine residue via an autocatalytic post-translational modification. Two non-identical subunits are generated from the proenzyme in this reaction, and the pyruvate is formed at the N-terminus of the alpha chain, which is derived from the carboxyl end of the proenzyme. The post-translation cleavage follows an unusual pathway, termed non-hydrolytic serinolysis, in which the side chain hydroxyl group of the serine supplies its oxygen atom to form the C-terminus of the beta chain, while the remainder of the serine residue undergoes an oxidative deamination to produce ammonia and the pyruvoyl prosthetic group on the alpha chain.

The protein resides in the cell membrane. The enzyme catalyses a 1,2-diacyl-sn-glycero-3-phospho-L-serine + H(+) = a 1,2-diacyl-sn-glycero-3-phosphoethanolamine + CO2. The protein operates within phospholipid metabolism; phosphatidylethanolamine biosynthesis; phosphatidylethanolamine from CDP-diacylglycerol: step 2/2. Functionally, catalyzes the formation of phosphatidylethanolamine (PtdEtn) from phosphatidylserine (PtdSer). The chain is Phosphatidylserine decarboxylase proenzyme from Parabacteroides distasonis (strain ATCC 8503 / DSM 20701 / CIP 104284 / JCM 5825 / NCTC 11152).